We begin with the raw amino-acid sequence, 395 residues long: Syncephapepsin (395 aa).

A signal peptide spans 1-19; the sequence is MKFSLALLATVALATISQA. Residues 20–71 constitute a propeptide, activation peptide; it reads APVEKQVAGKPFQLVKNPHYQANATRAIFRAEKKYARHTAIPEQGKTIVKSA. Positions 89 to 391 constitute a Peptidase A1 domain; it reads YYATVSVGTP…NQGVPEVQIA (303 aa). Asp107 is a catalytic residue. The cysteines at positions 120 and 123 are disulfide-linked. Asp288 is an active-site residue. Cys322 and Cys355 are joined by a disulfide.

This sequence belongs to the peptidase A1 family. Monomer.

Functionally, hydrolysis of proteins with a broad specificity. Residues recognized to be cleaved were primarily those of trypsin and chymotrypsin and Lys was the most susceptible. This Syncephalastrum racemosum (Filamentous fungus) protein is Syncephapepsin (SPSR).